Consider the following 315-residue polypeptide: Gamma-hemolysin component C (315 aa).

The first 29 residues, 1–29 (MLKNKILTTTLSVSLLAPLANPLLENAKA), serve as a signal peptide directing secretion.

It belongs to the aerolysin family. As to quaternary structure, toxicity requires sequential binding and synergistic association of a class S and a class F component which form heterooligomeric complexes. HlgC (class S) associates with HlgB (class F) thus forming an CB toxin.

In terms of biological role, toxin that seems to act by forming pores in the membrane of the cell. Has a hemolytic and a leucotoxic activity. This is Gamma-hemolysin component C (hlgC) from Staphylococcus aureus (strain COL).